The following is a 284-amino-acid chain: 2-dehydro-3-deoxyphosphooctonate aldolase (284 aa).

It belongs to the KdsA family.

It localises to the cytoplasm. It catalyses the reaction D-arabinose 5-phosphate + phosphoenolpyruvate + H2O = 3-deoxy-alpha-D-manno-2-octulosonate-8-phosphate + phosphate. It participates in carbohydrate biosynthesis; 3-deoxy-D-manno-octulosonate biosynthesis; 3-deoxy-D-manno-octulosonate from D-ribulose 5-phosphate: step 2/3. The protein operates within bacterial outer membrane biogenesis; lipopolysaccharide biosynthesis. This is 2-dehydro-3-deoxyphosphooctonate aldolase from Aliivibrio salmonicida (strain LFI1238) (Vibrio salmonicida (strain LFI1238)).